The following is a 141-amino-acid chain: VLSASDKANVKAVFGKIGGQAEEFGAETLERMFATYPQTKTYFPHFDLGKGSAQVKGHGKKVAAALVEAANHVDDIAGALSKLSDLHAQKLRVDPVNFKLLGQCFLVVVASHNPALLTPEVHASLDKFLCAVGTVLTAKYR.

In terms of domain architecture, Globin spans 1–141 (VLSASDKANV…VGTVLTAKYR (141 aa)). His-58 provides a ligand contact to O2. His-87 contributes to the heme b binding site.

This sequence belongs to the globin family. Heterotetramer of two alpha chains and two beta chains. In terms of tissue distribution, red blood cells.

Involved in oxygen transport from the lung to the various peripheral tissues. The protein is Hemoglobin subunit alpha-A (HBAA) of Sturnus vulgaris (Starling).